The sequence spans 248 residues: Probable transcriptional regulatory protein RHOS4_22610 (248 aa).

The interval 1 to 21 (MAGHSKWANIQHRKGKQDKLR) is disordered.

It belongs to the TACO1 family.

It is found in the cytoplasm. This Cereibacter sphaeroides (strain ATCC 17023 / DSM 158 / JCM 6121 / CCUG 31486 / LMG 2827 / NBRC 12203 / NCIMB 8253 / ATH 2.4.1.) (Rhodobacter sphaeroides) protein is Probable transcriptional regulatory protein RHOS4_22610.